Reading from the N-terminus, the 188-residue chain is Elongation factor P (188 aa).

Lys34 carries the N6-(3,6-diaminohexanoyl)-5-hydroxylysine modification.

The protein belongs to the elongation factor P family. May be beta-lysylated on the epsilon-amino group of Lys-34 by the combined action of EpmA and EpmB, and then hydroxylated on the C5 position of the same residue by EpmC (if this protein is present). Lysylation is critical for the stimulatory effect of EF-P on peptide-bond formation. The lysylation moiety may extend toward the peptidyltransferase center and stabilize the terminal 3-CCA end of the tRNA. Hydroxylation of the C5 position on Lys-34 may allow additional potential stabilizing hydrogen-bond interactions with the P-tRNA.

It is found in the cytoplasm. It functions in the pathway protein biosynthesis; polypeptide chain elongation. Involved in peptide bond synthesis. Alleviates ribosome stalling that occurs when 3 or more consecutive Pro residues or the sequence PPG is present in a protein, possibly by augmenting the peptidyl transferase activity of the ribosome. Modification of Lys-34 is required for alleviation. In Vibrio parahaemolyticus serotype O3:K6 (strain RIMD 2210633), this protein is Elongation factor P.